A 669-amino-acid polypeptide reads, in one-letter code: DNA ligase (669 aa).

NAD(+)-binding positions include Asp-33–Asp-37, Ser-82–Leu-83, and Glu-115. Lys-117 serves as the catalytic N6-AMP-lysine intermediate. NAD(+) is bound by residues Arg-138, Glu-172, Lys-286, and Lys-310. Residues Cys-401, Cys-404, Cys-417, and Cys-422 each coordinate Zn(2+). The BRCT domain occupies Ile-589–Asp-669.

The protein belongs to the NAD-dependent DNA ligase family. LigA subfamily. Mg(2+) serves as cofactor. Requires Mn(2+) as cofactor.

It carries out the reaction NAD(+) + (deoxyribonucleotide)n-3'-hydroxyl + 5'-phospho-(deoxyribonucleotide)m = (deoxyribonucleotide)n+m + AMP + beta-nicotinamide D-nucleotide.. DNA ligase that catalyzes the formation of phosphodiester linkages between 5'-phosphoryl and 3'-hydroxyl groups in double-stranded DNA using NAD as a coenzyme and as the energy source for the reaction. It is essential for DNA replication and repair of damaged DNA. The protein is DNA ligase of Borrelia recurrentis (strain A1).